The chain runs to 374 residues: MTSLSLSPAAGPQRSAAAPKAVAVWLLVCAGMVFAMAIIGAITRLTESGLSITEWKPVTGALPPLSEAQWLAEFEKYRQIPEYQLLKRGMSLEEFKGIYFWEWLHRLWGRLIGVVFLLPFVWFWVRGQVSRALAPTLAGLFLLGGLQGFIGWFMVQSGLTERTDVSHYRLALHLGMAFLIYAALLKVALGLLDPAPAPQPAAGRLRPHAWAALALLGVTIVWGAFVAGINAGFAYNTWPLMGGTLAPAEMWTQTPVWLNLLENTAAVQFVHRWLAVVTALVVLSLCWQAWRTGGGTRLRGVAAGLAAATVAQVGLGIATLLSVVWIPLATAHQGGALVLTGLLVWTLHLLRPPETPRQATPLTATPLTEMPAPR.

The next 8 membrane-spanning stretches (helical) occupy residues 22–42 (VAVW…IGAI), 107–127 (LWGR…WVRG), 135–155 (PTLA…WFMV), 172–192 (LHLG…LGLL), 209–229 (AWAA…VAGI), 265–285 (AAVQ…VLSL), 306–326 (AAAT…VVWI), and 327–347 (PLAT…VWTL). His271 provides a ligand contact to heme. Heme is bound at residue His332.

The protein belongs to the COX15/CtaA family. Type 2 subfamily. As to quaternary structure, interacts with CtaB. Requires heme b as cofactor.

Its subcellular location is the cell membrane. The catalysed reaction is Fe(II)-heme o + 2 A + H2O = Fe(II)-heme a + 2 AH2. It functions in the pathway porphyrin-containing compound metabolism; heme A biosynthesis; heme A from heme O: step 1/1. Its function is as follows. Catalyzes the conversion of heme O to heme A by two successive hydroxylations of the methyl group at C8. The first hydroxylation forms heme I, the second hydroxylation results in an unstable dihydroxymethyl group, which spontaneously dehydrates, resulting in the formyl group of heme A. The protein is Heme A synthase of Rhodospirillum centenum (strain ATCC 51521 / SW).